A 425-amino-acid chain; its full sequence is Glutamyl-tRNA reductase (425 aa).

Residues 49 to 52 (TCNR), Ser-107, 112 to 114 (EPQ), and Gln-118 each bind substrate. Catalysis depends on Cys-50, which acts as the Nucleophile. Residue 187-192 (GAGETI) coordinates NADP(+).

The protein belongs to the glutamyl-tRNA reductase family. Homodimer.

It carries out the reaction (S)-4-amino-5-oxopentanoate + tRNA(Glu) + NADP(+) = L-glutamyl-tRNA(Glu) + NADPH + H(+). The protein operates within porphyrin-containing compound metabolism; protoporphyrin-IX biosynthesis; 5-aminolevulinate from L-glutamyl-tRNA(Glu): step 1/2. Its function is as follows. Catalyzes the NADPH-dependent reduction of glutamyl-tRNA(Glu) to glutamate 1-semialdehyde (GSA). This Pseudomonas putida (strain ATCC 700007 / DSM 6899 / JCM 31910 / BCRC 17059 / LMG 24140 / F1) protein is Glutamyl-tRNA reductase.